Here is a 492-residue protein sequence, read N- to C-terminus: MKIQAIETVAADWSGDYLGIGFFEDSAAIDAGLTQLDQSLQDILQDLVSETEFQGKVGEQPWTRIAGPGSIRKVMLIGLGSPDAFTLDSLRQAAAAFAKAAQKQKAASAGLQLPSWDDDAAASTQAMAEGIELALHQEIRFKSDPDAKKPGEFPQEVHLLGLANQAAAIEKAQQICAGVILTRELVAAPANVVTPSALAETAAQIAEDHGLTLEVLEREECEAQGMGAFLGVSLASELPPKFIHLTYKPSGTPRRKLAIVGKGVTFDSGGLNLKVGGSGIETMKMDMAGSGATLGAAKAIGQLKPDVEVHFIVAAAENMISGHALHPGDILTASNGKTIEINNTDAEGRLTLADALVFAEKQGVDAIVDLATLTGACIVALGNDIAGMWTPEDSLAEELSQASEQAGEKFWRMPLEEKYFEGLKSPIADMKNTGPRPGGSITAALFLKQYIENTPWAHLDVAGPVWTEKENGYLNVGATGFAVRTLVNWVMG.

Mn(2+) is bound by residues Lys-262 and Asp-267. Lys-274 is an active-site residue. Asp-286, Asp-345, and Glu-347 together coordinate Mn(2+). Arg-349 is an active-site residue.

Belongs to the peptidase M17 family. Mn(2+) is required as a cofactor.

The protein localises to the cytoplasm. The enzyme catalyses Release of an N-terminal amino acid, Xaa-|-Yaa-, in which Xaa is preferably Leu, but may be other amino acids including Pro although not Arg or Lys, and Yaa may be Pro. Amino acid amides and methyl esters are also readily hydrolyzed, but rates on arylamides are exceedingly low.. The catalysed reaction is Release of an N-terminal amino acid, preferentially leucine, but not glutamic or aspartic acids.. In terms of biological role, presumably involved in the processing and regular turnover of intracellular proteins. Catalyzes the removal of unsubstituted N-terminal amino acids from various peptides. The sequence is that of Probable cytosol aminopeptidase from Acaryochloris marina (strain MBIC 11017).